The sequence spans 894 residues: Protein SEY1 homolog (894 aa).

Low complexity-rich tracts occupy residues 1–10 (MSEEITTNQT) and 36–48 (VQEQ…QEQQ). The segment at 1 to 97 (MSEEITTNQT…QKQQTQEQEH (97 aa)) is disordered. Over 1-800 (MSEEITTNQT…EQNRLTSGGG (800 aa)) the chain is Cytoplasmic. Residues 21–60 (RLSNENIKQEDEEQQVQEQQEQQQQEQQEQIDDQDTQQQE) are a coiled coil. Over residues 49 to 65 (EQIDDQDTQQQEDEFVV) the composition is skewed to acidic residues. Positions 78 to 93 (TPTLQETPQQQKQQTQ) are enriched in low complexity. Residues 138–361 (GFDYSVISIL…ADSFIPKRKY (224 aa)) form the GB1/RHD3-type G domain. Residue 148–155 (GPQSSGKS) coordinates GTP. Residues 801–821 (VPGYMIILLCVLGFNEFISII) traverse the membrane as a helical segment. Over 822–824 (SSP) the chain is Lumenal. A helical membrane pass occupies residues 825-845 (LLLLLTILLGGVGFVLFKLGL). The Cytoplasmic portion of the chain corresponds to 846–894 (AGPFIDYSSQILVHFISKVKDIVLHVEQLQEQNHNNNNNNNNTPKQKRE).

This sequence belongs to the TRAFAC class dynamin-like GTPase superfamily. GB1/RHD3 GTPase family. RHD3 subfamily.

Its subcellular location is the endoplasmic reticulum membrane. Probable GTP-binding protein that may be involved in cell development. This is Protein SEY1 homolog from Dictyostelium discoideum (Social amoeba).